The chain runs to 146 residues: Hemoglobin subunit beta (146 aa).

A Globin domain is found at 2–146 (EWTQQERSII…VVFALGRKYH (145 aa)). Residues His-63 and His-92 each contribute to the heme b site.

Belongs to the globin family. Heterotetramer of two alpha chains and two beta chains. Red blood cells.

In terms of biological role, involved in oxygen transport from gills to the various peripheral tissues. This chain is Hemoglobin subunit beta (hbb), found in Thunnus thynnus (Atlantic bluefin tuna).